A 151-amino-acid polypeptide reads, in one-letter code: Large ribosomal subunit protein bL9 (151 aa).

It belongs to the bacterial ribosomal protein bL9 family.

Functionally, binds to the 23S rRNA. The sequence is that of Large ribosomal subunit protein bL9 from Mycolicibacterium gilvum (strain PYR-GCK) (Mycobacterium gilvum (strain PYR-GCK)).